A 344-amino-acid polypeptide reads, in one-letter code: Type II methyltransferase M.FnuDI (344 aa).

The 330-residue stretch at 1–330 (MKLLSLFSGA…KRIKETLTDK (330 aa)) folds into the SAM-dependent MTase C5-type domain. The active site involves Cys-71.

This sequence belongs to the class I-like SAM-binding methyltransferase superfamily. C5-methyltransferase family.

The enzyme catalyses a 2'-deoxycytidine in DNA + S-adenosyl-L-methionine = a 5-methyl-2'-deoxycytidine in DNA + S-adenosyl-L-homocysteine + H(+). A methylase, recognizes the double-stranded sequence 5'-GGCC-3', methylates C-? on both strands, and protects the DNA from cleavage by the FnuDI endonuclease. The protein is Type II methyltransferase M.FnuDI (fnuDIM) of Fusobacterium nucleatum.